The sequence spans 278 residues: Large ribosomal subunit protein uL2 (278 aa).

Disordered stretches follow at residues 33-53 and 221-278; these read LTEG…TSRG and RGVA…KKKR. Residues 269-278 show a composition bias toward basic residues; sequence IRSRHAKKKR.

Belongs to the universal ribosomal protein uL2 family. Part of the 50S ribosomal subunit. Forms a bridge to the 30S subunit in the 70S ribosome.

Functionally, one of the primary rRNA binding proteins. Required for association of the 30S and 50S subunits to form the 70S ribosome, for tRNA binding and peptide bond formation. It has been suggested to have peptidyltransferase activity; this is somewhat controversial. Makes several contacts with the 16S rRNA in the 70S ribosome. The protein is Large ribosomal subunit protein uL2 of Novosphingobium aromaticivorans (strain ATCC 700278 / DSM 12444 / CCUG 56034 / CIP 105152 / NBRC 16084 / F199).